The primary structure comprises 239 residues: 4-hydroxy-tetrahydrodipicolinate reductase (239 aa).

Residues 8–13, 78–80, and 102–105 contribute to the NAD(+) site; these read GSTGKM, GTT, and SANM. The Proton donor/acceptor role is filled by His-134. His-135 is a (S)-2,3,4,5-tetrahydrodipicolinate binding site. The active-site Proton donor is Lys-138. (S)-2,3,4,5-tetrahydrodipicolinate is bound at residue 144–145; it reads GT.

It belongs to the DapB family.

Its subcellular location is the cytoplasm. It catalyses the reaction (S)-2,3,4,5-tetrahydrodipicolinate + NAD(+) + H2O = (2S,4S)-4-hydroxy-2,3,4,5-tetrahydrodipicolinate + NADH + H(+). The catalysed reaction is (S)-2,3,4,5-tetrahydrodipicolinate + NADP(+) + H2O = (2S,4S)-4-hydroxy-2,3,4,5-tetrahydrodipicolinate + NADPH + H(+). The protein operates within amino-acid biosynthesis; L-lysine biosynthesis via DAP pathway; (S)-tetrahydrodipicolinate from L-aspartate: step 4/4. Functionally, catalyzes the conversion of 4-hydroxy-tetrahydrodipicolinate (HTPA) to tetrahydrodipicolinate. The polypeptide is 4-hydroxy-tetrahydrodipicolinate reductase (Rickettsia peacockii (strain Rustic)).